A 321-amino-acid chain; its full sequence is Citrate synthase (321 aa).

Active-site residues include histidine 248 and aspartate 306.

It belongs to the citrate synthase family.

It catalyses the reaction oxaloacetate + acetyl-CoA + H2O = citrate + CoA + H(+). The protein operates within carbohydrate metabolism; tricarboxylic acid cycle; isocitrate from oxaloacetate: step 1/2. This chain is Citrate synthase (gltA), found in Bartonella bacilliformis.